The sequence spans 28 residues: Dermaseptin-H2 (28 aa).

This sequence belongs to the frog skin active peptide (FSAP) family. Dermaseptin subfamily. As to expression, expressed by the skin glands.

The protein resides in the secreted. Possesses a potent antimicrobial activity against Gram-positive and Gram-negative bacteria. Probably acts by disturbing membrane functions with its amphipathic structure. The protein is Dermaseptin-H2 of Pithecopus azureus (Orange-legged monkey tree frog).